The sequence spans 732 residues: Protein FAR1-RELATED SEQUENCE 4 (732 aa).

In terms of domain architecture, FAR1 spans 11–97 (LFYKDYAKSV…VKEHNHDLLP (87 aa)). The region spanning 212–308 (VVSFETSYFV…CLWHVLDQLP (97 aa)) is the MULE domain. The SWIM-type zinc finger occupies 490–526 (YLVDWDEFKSDIYCSCRSFEYKGYLCRHAIVVLQMSG). Positions 623–683 (QEENQYGSTS…ETVGEGSQEG (61 aa)) are disordered. Residues 624–635 (EENQYGSTSTQI) are compositionally biased toward polar residues.

Belongs to the FHY3/FAR1 family. In terms of tissue distribution, expressed in hypocotyls, rosette and cauline leaves, inflorescences stems, flowers and siliques.

The protein localises to the nucleus. Functionally, putative transcription activator involved in regulating light control of development. The polypeptide is Protein FAR1-RELATED SEQUENCE 4 (FRS4) (Arabidopsis thaliana (Mouse-ear cress)).